Here is a 135-residue protein sequence, read N- to C-terminus: Ribonuclease P protein component (135 aa).

Belongs to the RnpA family. In terms of assembly, consists of a catalytic RNA component (M1 or rnpB) and a protein subunit.

The catalysed reaction is Endonucleolytic cleavage of RNA, removing 5'-extranucleotides from tRNA precursor.. RNaseP catalyzes the removal of the 5'-leader sequence from pre-tRNA to produce the mature 5'-terminus. It can also cleave other RNA substrates such as 4.5S RNA. The protein component plays an auxiliary but essential role in vivo by binding to the 5'-leader sequence and broadening the substrate specificity of the ribozyme. This chain is Ribonuclease P protein component, found in Pseudomonas aeruginosa (strain LESB58).